The following is a 178-amino-acid chain: CASP-like protein 5B1 (178 aa).

Residues Met1 to Thr37 lie on the Cytoplasmic side of the membrane. A helical membrane pass occupies residues Ile38 to Met58. Over Val59–Ala69 the chain is Extracellular. N-linked (GlcNAc...) asparagine glycosylation occurs at Asn66. A helical transmembrane segment spans residues Phe70 to Leu90. Over Asp91 to Ser104 the chain is Cytoplasmic. Residues Val105 to Ala125 form a helical membrane-spanning segment. Residues Cys126–Ala154 lie on the Extracellular side of the membrane. A helical transmembrane segment spans residues Ala155–Trp175. Residues Ala176–Glu178 lie on the Cytoplasmic side of the membrane.

The protein belongs to the Casparian strip membrane proteins (CASP) family. As to quaternary structure, homodimer and heterodimers.

The protein localises to the cell membrane. The polypeptide is CASP-like protein 5B1 (Ginkgo biloba (Ginkgo)).